Here is a 188-residue protein sequence, read N- to C-terminus: NYHVLLGQNNLSEDVQHRLVSQSFRHPDYKPFLMRNHTRKPKDYSNDLMLLHLSEPADITDGVKVIDLPTKEPKVGSTCLVSGWGSTNPSEWEFPDDLQCVNIHLLSNEKCIKAYKEKVTDLMLCAGELEGGKDTCRGDSGGPLICDGVLQGITSWGSVPCGEPNKPGIYTKLIKFTSWIKEVMKENP.

The region spanning 1 to 185 (NYHVLLGQNN…FTSWIKEVMK (185 aa)) is the Peptidase S1 domain. N-linked (GlcNAc...) asparagine glycosylation is found at Asn-10 and Asn-36. Residue Asp-47 is the Charge relay system of the active site. Cystine bridges form between Cys-79-Cys-146, Cys-111-Cys-125, and Cys-136-Cys-161. Residue Ser-140 is the Charge relay system of the active site.

It belongs to the peptidase S1 family. Kallikrein subfamily.

The enzyme catalyses Preferential cleavage of Arg-|-Xaa bonds in small molecule substrates. Highly selective action to release kallidin (lysyl-bradykinin) from kininogen involves hydrolysis of Met-|-Xaa or Leu-|-Xaa.. Glandular kallikreins cleave Met-Lys and Arg-Ser bonds in kininogen to release Lys-bradykinin. This Rattus norvegicus (Rat) protein is Glandular kallikrein-3, submandibular (Klk3).